An 887-amino-acid chain; its full sequence is DNA mismatch repair protein MutS (887 aa).

ATP is bound at residue glycine 626 to serine 633.

It belongs to the DNA mismatch repair MutS family.

In terms of biological role, this protein is involved in the repair of mismatches in DNA. It is possible that it carries out the mismatch recognition step. This protein has a weak ATPase activity. The polypeptide is DNA mismatch repair protein MutS (Methanococcoides burtonii (strain DSM 6242 / NBRC 107633 / OCM 468 / ACE-M)).